Reading from the N-terminus, the 1186-residue chain is Cytotoxicity-associated immunodominant antigen (1186 aa).

The segment covering 630 to 649 has biased composition (basic and acidic residues); it reads EKEVEKKLESKSGNKNKMEA. Residues 630-652 are disordered; the sequence is EKEVEKKLESKSGNKNKMEAKAQ.

In terms of biological role, may be necessary for the transcription, folding, export, or function of the cytotoxin. The protein is Cytotoxicity-associated immunodominant antigen (cagA) of Helicobacter pylori (strain ATCC 700392 / 26695) (Campylobacter pylori).